We begin with the raw amino-acid sequence, 503 residues long: MATLLSPFSPSPLAKVSQIIDSTSSPSFSLFPLGRQNACSRKADHHHHHRIRTSKFGNFLELTPESVPEFLDFDLPWFHPSDRIRYDVIIIGTGPAGLRLAEQVSSRHSVKVCCVDPSPLSTWPNNYGVWVDEFEDIGLVDCLDKTWPMTCVFINDHKTKYLDRPYGRVSRNILKTKLLENCVSNGVKFHKAKVWHVNHQEFESSIVCDDGNEIKASLIVDASGFASSFVEYDKPRNHGYQIAHGILAEVESHPFDLDKMVLMDWRDSHLGNEPYLRASNLKLPTFLYAMPFDSNLVFLEETSLVSRPVLSYKEVKSRMAARLRHMGIRVKRVIEDEKCLIPMGGPLPVIPQSVMAIGGTSGLIHPATGYMVARTMALAPALADAIAECLGSTRMIRGRPLHQKVWNGLWPIDRRCNREFYSFGMETLLKLDLKGTRRFFDAFFDLNPYYWHGFLSSRLSLAELAGLSLSLFGHASNSSRLDIVTKCPVPLVKMMGNLALETI.

88–117 (VIIIGTGPAGLRLAEQVSSRHSVKVCCVDP) provides a ligand contact to NAD(+).

This sequence belongs to the lycopene cyclase family.

The protein resides in the plastid. It localises to the chromoplast. The enzyme catalyses all-trans-violaxanthin = all-trans-capsorubin. It carries out the reaction all-trans-antheraxanthin = all-trans-capsanthin. It functions in the pathway carotenoid biosynthesis; capsanthin biosynthesis; capsanthin from antheraxanthin: step 1/1. Its pathway is carotenoid biosynthesis; capsorubin biosynthesis; capsorubin from violaxanthin: step 1/1. In terms of biological role, catalyzes the conversion of the ubiquitous 5,6-epoxycarotenoids, antheraxanthin and violaxanthin, into capsanthin and capsorubin, respectively. The sequence is that of Capsanthin/capsorubin synthase, chromoplastic (CCS) from Citrus sinensis (Sweet orange).